The following is a 310-amino-acid chain: UPF0282 protein PF0593 (310 aa).

The protein belongs to the UPF0282 family.

The sequence is that of UPF0282 protein PF0593 from Pyrococcus furiosus (strain ATCC 43587 / DSM 3638 / JCM 8422 / Vc1).